The sequence spans 443 residues: C4-dicarboxylate transport protein (443 aa).

A run of 9 helical transmembrane segments spans residues 17 to 37, 57 to 77, 92 to 112, 139 to 159, 161 to 181, 201 to 221, 234 to 254, 320 to 340, and 368 to 388; these read PFYS…ILLG, LVKM…IAGM, LYFL…ANVV, EQSI…GAFA, GDIL…AMVG, LVGI…AFTI, MLIG…LGAV, IYMT…LSWG, and AATL…ILGI.

Belongs to the dicarboxylate/amino acid:cation symporter (DAACS) (TC 2.A.23) family.

Its subcellular location is the cell inner membrane. Functionally, responsible for the transport of dicarboxylates such as succinate, fumarate, and malate from the periplasm across the membrane. This chain is C4-dicarboxylate transport protein, found in Rhizobium etli (strain ATCC 51251 / DSM 11541 / JCM 21823 / NBRC 15573 / CFN 42).